Reading from the N-terminus, the 28-residue chain is Flagellar filament 34 kDa core protein (28 aa).

It belongs to the bacterial flagellin family. As to quaternary structure, the flagellum consists of an outer layer composed of repeating units of FlaA around a core that contains several antigenically related polypeptides.

The protein localises to the periplasmic flagellum. The protein resides in the periplasm. Functionally, component of the core of the flagella. This Treponema phagedenis protein is Flagellar filament 34 kDa core protein.